The following is a 1231-amino-acid chain: uncharacterized protein (1231 aa).

3 disordered regions span residues 171–197 (LKPD…QHDD), 210–259 (DESF…HLPT), and 389–547 (ASPR…RSSR). A compositionally biased stretch (basic residues) spans 440 to 450 (RSRHSHKRRSI). Ser449, Ser451, Ser453, and Ser455 each carry phosphoserine. Basic residues predominate over residues 458–502 (RGGRRAVRRSRSRSPRRSYNRGSTRSRSRSMRHRSRSPAHYRGRG). Positions 503 to 541 (RGREPASKERGSSSRDFGGRHSLQRERERSSEYYHRNEG) are enriched in basic and acidic residues. Tyr549 is subject to Phosphotyrosine. Disordered stretches follow at residues 570-591 (KTSS…ASEP), 950-981 (PNLD…DDEE), and 1058-1203 (TLSK…PPFN). Ser573 and Ser589 each carry phosphoserine. At Thr970 the chain carries Phosphothreonine. A Phosphoserine modification is found at Ser972. Residues 1076–1103 (YMMNQQHGAPNAQNAPNLGQNPGQNLGQ) are compositionally biased toward polar residues. Over residues 1118-1127 (QQQQQQQQQQ) the composition is skewed to low complexity. Residues 1178–1203 (PPGPGGYVGPPPNPWASNVPPQPPFN) show a composition bias toward pro residues.

This is an uncharacterized protein from Drosophila melanogaster (Fruit fly).